A 120-amino-acid polypeptide reads, in one-letter code: Large ribosomal subunit protein uL29 (120 aa).

This sequence belongs to the universal ribosomal protein uL29 family. In terms of assembly, component of the large ribosomal subunit. Mature ribosomes consist of a small (40S) and a large (60S) subunit. The 40S subunit contains about 32 different proteins and 1 molecule of RNA (18S). The 60S subunit contains 45 different proteins and 3 molecules of RNA (25S, 5.8S and 5S).

Its subcellular location is the cytoplasm. Its function is as follows. Component of the ribosome, a large ribonucleoprotein complex responsible for the synthesis of proteins in the cell. The small ribosomal subunit (SSU) binds messenger RNAs (mRNAs) and translates the encoded message by selecting cognate aminoacyl-transfer RNA (tRNA) molecules. The large subunit (LSU) contains the ribosomal catalytic site termed the peptidyl transferase center (PTC), which catalyzes the formation of peptide bonds, thereby polymerizing the amino acids delivered by tRNAs into a polypeptide chain. The nascent polypeptides leave the ribosome through a tunnel in the LSU and interact with protein factors that function in enzymatic processing, targeting, and the membrane insertion of nascent chains at the exit of the ribosomal tunnel. The sequence is that of Large ribosomal subunit protein uL29 from Candida albicans (strain SC5314 / ATCC MYA-2876) (Yeast).